The primary structure comprises 361 residues: UPF0283 membrane protein mlr0776 (361 aa).

The disordered stretch occupies residues 1–33; that stretch reads MTAPRKPAAFRIEPEAAPTQETPKARQAELSRK. Basic and acidic residues predominate over residues 23–32; sequence PKARQAELSR. A run of 2 helical transmembrane segments spans residues 73–93 and 108–128; these read LFGS…VGLW and LGWL…VILI.

The protein belongs to the UPF0283 family.

Its subcellular location is the cell inner membrane. This is UPF0283 membrane protein mlr0776 from Mesorhizobium japonicum (strain LMG 29417 / CECT 9101 / MAFF 303099) (Mesorhizobium loti (strain MAFF 303099)).